The following is a 72-amino-acid chain: Small, acid-soluble spore protein C (72 aa).

This sequence belongs to the alpha/beta-type SASP family.

SASP are bound to spore DNA. They are double-stranded DNA-binding proteins that cause DNA to change to an a-like conformation. They protect the DNA backbone from chemical and enzymatic cleavage and are thus involved in dormant spore's high resistance to UV light. The chain is Small, acid-soluble spore protein C (sasP-C) from Priestia megaterium (Bacillus megaterium).